Consider the following 162-residue polypeptide: Endoribonuclease YbeY (162 aa).

H128, H132, and H138 together coordinate Zn(2+).

The protein belongs to the endoribonuclease YbeY family. Requires Zn(2+) as cofactor.

It localises to the cytoplasm. Single strand-specific metallo-endoribonuclease involved in late-stage 70S ribosome quality control and in maturation of the 3' terminus of the 16S rRNA. The polypeptide is Endoribonuclease YbeY (Levilactobacillus brevis (strain ATCC 367 / BCRC 12310 / CIP 105137 / JCM 1170 / LMG 11437 / NCIMB 947 / NCTC 947) (Lactobacillus brevis)).